The following is a 90-amino-acid chain: Probable Fe(2+)-trafficking protein (90 aa).

The protein belongs to the Fe(2+)-trafficking protein family.

Its function is as follows. Could be a mediator in iron transactions between iron acquisition and iron-requiring processes, such as synthesis and/or repair of Fe-S clusters in biosynthetic enzymes. The sequence is that of Probable Fe(2+)-trafficking protein from Cupriavidus pinatubonensis (strain JMP 134 / LMG 1197) (Cupriavidus necator (strain JMP 134)).